The following is a 170-amino-acid chain: Thioredoxin-like protein YneN (170 aa).

Residues 5 to 23 form a helical membrane-spanning segment; it reads WLAGILLIMLVGYTGWNLY. The Thioredoxin domain maps to 33-170; sequence IQEGQQAPDF…KEMEQKLDLD (138 aa). Cysteine 71 and cysteine 74 are oxidised to a cystine.

It belongs to the thioredoxin family.

The protein localises to the cell membrane. This is Thioredoxin-like protein YneN (yneN) from Bacillus subtilis (strain 168).